The sequence spans 241 residues: Probable transcriptional regulatory protein Reut_A2522 (241 aa).

This sequence belongs to the TACO1 family.

The protein localises to the cytoplasm. The chain is Probable transcriptional regulatory protein Reut_A2522 from Cupriavidus pinatubonensis (strain JMP 134 / LMG 1197) (Cupriavidus necator (strain JMP 134)).